A 345-amino-acid polypeptide reads, in one-letter code: Sorting nexin-15 (345 aa).

Residues 1–130 (MSRQAKDDFL…EFFRGGEVTR (130 aa)) form the PX domain. Arg105 is subject to Omega-N-methylarginine. The disordered stretch occupies residues 133–163 (EVSGDLHILPPPLIPTPPPDEPRVQPHETWL). Residues 141–151 (LPPPLIPTPPP) show a composition bias toward pro residues. Residues Ser208 and Ser234 each carry the phosphoserine modification. A disordered region spans residues 226–274 (SKEEGAGPSPTHIGELAALEAGSGRPDQEPWEPGGQAEEDDEEGEPAPA). The MIT domain maps to 272–345 (APAYLSQATE…AEEILHLHLS (74 aa)).

The protein belongs to the sorting nexin family.

May be involved in several stages of intracellular trafficking. Overexpression of SNX15 disrupts the normal trafficking of proteins from the plasma membrane to recycling endosomes or the TGN. This is Sorting nexin-15 (SNX15) from Bos taurus (Bovine).